The primary structure comprises 401 residues: S-adenosylmethionine synthase 1 (401 aa).

Residue H15 coordinates ATP. Residue D17 coordinates Mg(2+). Position 43 (E43) interacts with K(+). L-methionine contacts are provided by E56 and Q98. The interval 98-108 is flexible loop; that stretch reads QSPDIAQGVDK. ATP is bound by residues 173–175, 246–247, D255, 261–262, A278, and K282; these read DGK, RF, and RK. D255 provides a ligand contact to L-methionine. Position 286 (K286) interacts with L-methionine.

Belongs to the AdoMet synthase family. As to quaternary structure, homotetramer; dimer of dimers. Requires Mg(2+) as cofactor. K(+) is required as a cofactor.

The protein resides in the cytoplasm. It carries out the reaction L-methionine + ATP + H2O = S-adenosyl-L-methionine + phosphate + diphosphate. It participates in amino-acid biosynthesis; S-adenosyl-L-methionine biosynthesis; S-adenosyl-L-methionine from L-methionine: step 1/1. Catalyzes the formation of S-adenosylmethionine (AdoMet) from methionine and ATP. The overall synthetic reaction is composed of two sequential steps, AdoMet formation and the subsequent tripolyphosphate hydrolysis which occurs prior to release of AdoMet from the enzyme. The sequence is that of S-adenosylmethionine synthase 1 from Frankia casuarinae (strain DSM 45818 / CECT 9043 / HFP020203 / CcI3).